We begin with the raw amino-acid sequence, 207 residues long: Large ribosomal subunit protein uL4 (207 aa).

Residues 55 to 75 (SAVRGGGRKPWRQKGTGRARQ) are disordered. Residues 60 to 71 (GGRKPWRQKGTG) show a composition bias toward basic residues.

The protein belongs to the universal ribosomal protein uL4 family. In terms of assembly, part of the 50S ribosomal subunit.

In terms of biological role, one of the primary rRNA binding proteins, this protein initially binds near the 5'-end of the 23S rRNA. It is important during the early stages of 50S assembly. It makes multiple contacts with different domains of the 23S rRNA in the assembled 50S subunit and ribosome. Its function is as follows. Forms part of the polypeptide exit tunnel. The chain is Large ribosomal subunit protein uL4 from Staphylococcus epidermidis (strain ATCC 35984 / DSM 28319 / BCRC 17069 / CCUG 31568 / BM 3577 / RP62A).